The chain runs to 1391 residues: Enhancer of mRNA-decapping protein 4 (1391 aa).

4 WD repeats span residues 170 to 210 (GITG…GKIQ), 226 to 274 (SIFR…TNHN), 292 to 331 (GHSGRLSEGALSPDGTVLATASHDGYVKFWQIYIEGQDQP), and 340 to 390 (HNGR…SLQT). 2 disordered regions span residues 703–724 (QASPTRERSPDVISSASTAMPQ) and 897–924 (DWKSKLSPRSSPKLRRKSKKDEMELAKS). Positions 915–924 (KKDEMELAKS) are enriched in basic and acidic residues. Residues 935-968 (ELQEELLCMLRSQQKELSDLRQNQLELMKKLTDH) adopt a coiled-coil conformation.

The protein belongs to the WD repeat EDC4 family.

The protein resides in the cytoplasm. It is found in the P-body. It localises to the nucleus. In the process of mRNA degradation, seems to play a role in mRNA decapping. The chain is Enhancer of mRNA-decapping protein 4 (edc4) from Xenopus laevis (African clawed frog).